A 422-amino-acid chain; its full sequence is Phthiocerol/phthiodiolone dimycocerosyl transferase (422 aa).

Histidine 124 acts as the Proton acceptor in catalysis.

It belongs to the acyltransferase PapA5 family. As to quaternary structure, monomer. Interacts directly with the acyl carrier protein (ACP) domain of the mycocerosic acid synthase (mas) protein.

The catalysed reaction is 2 a mycocerosyl-[mycocerosic acid synthase] + a phthiocerol = a dimycocerosyl phthiocerol + 2 holo-[mycocerosic acid synthase].. It catalyses the reaction 2 a mycocerosyl-[mycocerosic acid synthase] + a phthiodiolone = a dimycocerosyl phthiodiolone + 2 holo-[mycocerosic acid synthase].. It carries out the reaction 2 a mycocerosyl-[mycocerosic acid synthase] + a phenolphthiocerol = a dimycocerosyl phenolphthiocerol + 2 holo-[mycocerosic acid synthase].. Functionally, catalyzes diesterification of phthiocerol, phthiodiolone, and phenolphthiocerol with mycocerosic acids, the final step in the phthiocerol, phthiodiolone and phenolphthiocerol dimycocerosate esters (PDIM) synthesis. Can directly transfer the mycocerosate bound to the mycocerosic acid synthase (mas) onto the substrate alcohols. This Mycobacterium tuberculosis (strain ATCC 25177 / H37Ra) protein is Phthiocerol/phthiodiolone dimycocerosyl transferase (papA5).